Reading from the N-terminus, the 147-residue chain is Hemoglobin subunit rho (147 aa).

The Globin domain occupies 3 to 147 (HWSAEEKQLI…VAHALAYKYH (145 aa)). Histidine 64 and histidine 93 together coordinate heme b.

The protein belongs to the globin family.

Its function is as follows. The rho chain is the major early embryonic beta-type hemoglobin chain. The polypeptide is Hemoglobin subunit rho (Gallus gallus (Chicken)).